The following is an 84-amino-acid chain: Anaphase-promoting complex subunit 11 (84 aa).

The RING-type; atypical zinc-finger motif lies at 34-77; sequence CPDCKLPGDDCPLIWGACNHAFHLHCILKWVNSQTSQAHCPMCR.

Belongs to the RING-box family. Part of the APC/C complex composed of at least 10 subunits. Interacts with APC2.

Its subcellular location is the cytoplasm. It is found in the nucleus. Its pathway is protein modification; protein ubiquitination. Component of the anaphase promoting complex/cyclosome (APC/C), a cell cycle-regulated E3 ubiquitin-protein ligase complex that controls progression through mitosis and the G1 phase of the cell cycle. The APC/C complex controls several key steps in the cell cycle by mediating ubiquitination and subsequent degradation of target proteins such as cyclins. The APC/C complex is required for the female gametophyte development and is involved in several aspect of development by controlling cell division and cell elongation. Involved in the control of endoreduplication. May recruit the E2 ubiquitin-conjugating enzymes to the complex. The protein is Anaphase-promoting complex subunit 11 of Arabidopsis thaliana (Mouse-ear cress).